A 103-amino-acid polypeptide reads, in one-letter code: Small ribosomal subunit protein uS14c (103 aa).

The tract at residues 34 to 56 is disordered; the sequence is KVSPLSLSEKTKMREKLQSLPRN.

The protein belongs to the universal ribosomal protein uS14 family. As to quaternary structure, part of the 30S ribosomal subunit.

The protein localises to the plastid. It is found in the chloroplast. Functionally, binds 16S rRNA, required for the assembly of 30S particles. The chain is Small ribosomal subunit protein uS14c from Brachypodium distachyon (Purple false brome).